Here is a 159-residue protein sequence, read N- to C-terminus: Large ribosomal subunit protein uL22 (159 aa).

The protein belongs to the universal ribosomal protein uL22 family. As to quaternary structure, part of the 50S ribosomal subunit.

In terms of biological role, this protein binds specifically to 23S rRNA; its binding is stimulated by other ribosomal proteins, e.g. L4, L17, and L20. It is important during the early stages of 50S assembly. It makes multiple contacts with different domains of the 23S rRNA in the assembled 50S subunit and ribosome. The globular domain of the protein is located near the polypeptide exit tunnel on the outside of the subunit, while an extended beta-hairpin is found that lines the wall of the exit tunnel in the center of the 70S ribosome. In Thermotoga sp. (strain RQ2), this protein is Large ribosomal subunit protein uL22.